The chain runs to 102 residues: Hypersensitivity to hygromycin-B protein 1 (102 aa).

The signal sequence occupies residues 1 to 17 (MSLSFLLFSPFLPPCFS). A helical transmembrane segment spans residues 18 to 38 (SISICLSVLSTVSFFFAFTIP). The Cytoplasmic portion of the chain corresponds to 39–69 (HYVLRCGSVDEWHIHSSAEDFRTQRCVCAVK). A helical membrane pass occupies residues 70–90 (LSASLLGCLLACASWSLLLEV). Over 91–102 (SRIKWHVGTAYS) the chain is Extracellular.

The protein resides in the membrane. Functionally, involved in vacuolar trafficking. The polypeptide is Hypersensitivity to hygromycin-B protein 1 (Saccharomyces cerevisiae (strain ATCC 204508 / S288c) (Baker's yeast)).